The primary structure comprises 433 residues: Homoserine O-acetyltransferase (433 aa).

In terms of domain architecture, AB hydrolase-1 spans 41-385 (NVVLVCHALT…HGHDAFLVEP (345 aa)). Residues 55–74 (VARSPAPERNEGTRGAGQAG) form a disordered region. Serine 166 acts as the Nucleophile in catalysis. Arginine 237 lines the substrate pocket. Active-site residues include aspartate 345 and histidine 378. Aspartate 379 is a binding site for substrate. Positions 403 to 433 (RAVSDDGGGGGNDSARPERDHAPVHASLFKG) are disordered.

The protein belongs to the AB hydrolase superfamily. MetX family. As to quaternary structure, homodimer.

Its subcellular location is the cytoplasm. The catalysed reaction is L-homoserine + acetyl-CoA = O-acetyl-L-homoserine + CoA. Its pathway is amino-acid biosynthesis; L-methionine biosynthesis via de novo pathway; O-acetyl-L-homoserine from L-homoserine: step 1/1. Functionally, transfers an acetyl group from acetyl-CoA to L-homoserine, forming acetyl-L-homoserine. The protein is Homoserine O-acetyltransferase of Halorubrum lacusprofundi (strain ATCC 49239 / DSM 5036 / JCM 8891 / ACAM 34).